Here is a 525-residue protein sequence, read N- to C-terminus: GMP synthase [glutamine-hydrolyzing] (525 aa).

Residues 9-207 (RILILDFGSQ…VRDICQCEAL (199 aa)) form the Glutamine amidotransferase type-1 domain. Cys86 functions as the Nucleophile in the catalytic mechanism. Residues His181 and Glu183 contribute to the active site. The region spanning 208 to 400 (WTPAKIIDDA…LGLPYDMLYR (193 aa)) is the GMPS ATP-PPase domain. An ATP-binding site is contributed by 235–241 (SGGVDSS).

Homodimer.

The enzyme catalyses XMP + L-glutamine + ATP + H2O = GMP + L-glutamate + AMP + diphosphate + 2 H(+). Its pathway is purine metabolism; GMP biosynthesis; GMP from XMP (L-Gln route): step 1/1. In terms of biological role, catalyzes the synthesis of GMP from XMP. The sequence is that of GMP synthase [glutamine-hydrolyzing] from Shigella boydii serotype 4 (strain Sb227).